The sequence spans 62 residues: Statherin (62 aa).

A signal peptide spans 1 to 19; sequence MKFLVFAFILALMVSMIGA. Residues 20–25 are hydroxyapatite-binding; inhibits crystal growth; the sequence is DSSEEK. Phosphoserine occurs at positions 21 and 22. A cross-link (isoglutamyl lysine isopeptide (Lys-Gln); in form cyclo-statherin Q-37) is located at residues 25–56; that stretch reads KFLRRIGRFGYGYGPYQPVPEQPLYPQPYQPQ. Residues 25-58 constitute a cross-link (isoglutamyl lysine isopeptide (Lys-Gln); in form cyclo-statherin Q-39); it reads KFLRRIGRFGYGYGPYQPVPEQPLYPQPYQPQYQ. The tract at residues 38–62 is hydrophobic; inhibits precipitation of calcium phosphate salts; the sequence is GPYQPVPEQPLYPQPYQPQYQQYTF.

Belongs to the histatin/statherin family. Substrate for transglutaminase-2. More than 95% of the cyclized peptide is cyclo-statherin Q-37, and less than 5% is cyclo-statherin Q-39. Cyclized forms account for about 1% of total statherin in saliva. In terms of processing, sulfated on tyrosine residues. As to expression, secreted by parotid and submandibular glands.

It is found in the secreted. In terms of biological role, salivary protein that stabilizes saliva supersaturated with calcium salts by inhibiting the precipitation of calcium phosphate salts. It also modulates hydroxyapatite crystal formation on the tooth surface. The chain is Statherin (STATH) from Homo sapiens (Human).